The chain runs to 96 residues: ATP-dependent Clp protease adapter protein ClpS (96 aa).

This sequence belongs to the ClpS family. In terms of assembly, binds to the N-terminal domain of the chaperone ClpA.

Its function is as follows. Involved in the modulation of the specificity of the ClpAP-mediated ATP-dependent protein degradation. This chain is ATP-dependent Clp protease adapter protein ClpS, found in Campylobacter jejuni subsp. doylei (strain ATCC BAA-1458 / RM4099 / 269.97).